The primary structure comprises 522 residues: Probable mannosyltransferase KTR5 (522 aa).

The Cytoplasmic portion of the chain corresponds to 1 to 16 (MLLIRRTINAFLGCIH). Residues 17 to 37 (CNLTATCILIAFVITMYVVLV) traverse the membrane as a helical; Signal-anchor for type II membrane protein segment. The interval 38 to 82 (SEPASVDGTMGNFLPFSKMDLATKRDRPFYSNCVNTQDYLLNPSY) is stem region. At 38 to 522 (SEPASVDGTM…REDYLRQFGN (485 aa)) the chain is on the lumenal side. Residues 83-522 (IKQNASFVML…REDYLRQFGN (440 aa)) are catalytic. Asn86 is a glycosylation site (N-linked (GlcNAc...) asparagine). The active-site Nucleophile is the Glu363.

The protein belongs to the glycosyltransferase 15 family.

The protein resides in the membrane. Functionally, possible glycosyltransferase that transfers an alpha-D-mannosyl residue from GDP-mannose into lipid-linked oligosaccharide, forming an alpha-(1-&gt;2)-D-mannosyl-D-mannose linkage. This is Probable mannosyltransferase KTR5 (KTR5) from Saccharomyces cerevisiae (strain ATCC 204508 / S288c) (Baker's yeast).